Here is a 218-residue protein sequence, read N- to C-terminus: uncharacterized protein (218 aa).

The next 7 membrane-spanning stretches (helical) occupy residues 9 to 29, 42 to 62, 67 to 87, 107 to 127, 134 to 154, 159 to 179, and 192 to 212; these read LLVIVGIDLILGGDNAVVIAM, AIILGTFIAVAMRIGLTSAAV, IPFLQCAGGIFLLYLGYQLLI, TIVLADLFMSLDNVIAVAGAS, VVIGLCVSVPVIIWGSKLIHI, IPLLIYAGSGLLAYTGGEMIV, and GTVETLLPILTVAFVILASIY.

Belongs to the TerC family.

It localises to the cell membrane. This is an uncharacterized protein from Bacillus subtilis (strain 168).